A 395-amino-acid chain; its full sequence is S-adenosylmethionine synthase (395 aa).

Residue H16 coordinates ATP. A Mg(2+)-binding site is contributed by D18. E44 contributes to the K(+) binding site. Residues E57 and Q100 each coordinate L-methionine. Residues 100 to 110 (QSPDIAQGVDR) form a flexible loop region. ATP-binding positions include 167-169 (DAK), 233-234 (RF), D242, 248-249 (RK), A265, and K269. D242 is an L-methionine binding site. K273 lines the L-methionine pocket.

Belongs to the AdoMet synthase family. As to quaternary structure, homotetramer; dimer of dimers. Mg(2+) serves as cofactor. It depends on K(+) as a cofactor.

Its subcellular location is the cytoplasm. It carries out the reaction L-methionine + ATP + H2O = S-adenosyl-L-methionine + phosphate + diphosphate. It participates in amino-acid biosynthesis; S-adenosyl-L-methionine biosynthesis; S-adenosyl-L-methionine from L-methionine: step 1/1. Functionally, catalyzes the formation of S-adenosylmethionine (AdoMet) from methionine and ATP. The overall synthetic reaction is composed of two sequential steps, AdoMet formation and the subsequent tripolyphosphate hydrolysis which occurs prior to release of AdoMet from the enzyme. The chain is S-adenosylmethionine synthase from Burkholderia ambifaria (strain MC40-6).